Consider the following 77-residue polypeptide: UPF0213 protein VNG_2274C (77 aa).

The 75-residue stretch at M1–A75 folds into the GIY-YIG domain.

Belongs to the UPF0213 family.

This chain is UPF0213 protein VNG_2274C, found in Halobacterium salinarum (strain ATCC 700922 / JCM 11081 / NRC-1) (Halobacterium halobium).